The following is a 129-amino-acid chain: MGKAKAERRLKDNEAQAVARTIRVSPQKLNLVAALIRGKKVDRALAELEFSRKRIAGTVRKTLESAIANAENNHDLDVDSLIVAEAFVGKSIVMKRFHARGRGRASRVEKPFAHLTIVVREVEAKGEAA.

It belongs to the universal ribosomal protein uL22 family. As to quaternary structure, part of the 50S ribosomal subunit.

In terms of biological role, this protein binds specifically to 23S rRNA; its binding is stimulated by other ribosomal proteins, e.g. L4, L17, and L20. It is important during the early stages of 50S assembly. It makes multiple contacts with different domains of the 23S rRNA in the assembled 50S subunit and ribosome. Functionally, the globular domain of the protein is located near the polypeptide exit tunnel on the outside of the subunit, while an extended beta-hairpin is found that lines the wall of the exit tunnel in the center of the 70S ribosome. The protein is Large ribosomal subunit protein uL22 of Sinorhizobium medicae (strain WSM419) (Ensifer medicae).